Reading from the N-terminus, the 330-residue chain is Beta-ketoacyl-[acyl-carrier-protein] synthase III (330 aa).

Residues C114 and H255 contribute to the active site. The segment at 256 to 260 is ACP-binding; the sequence is QANQR. N285 is a catalytic residue.

This sequence belongs to the thiolase-like superfamily. FabH family. In terms of assembly, homodimer.

The protein resides in the cytoplasm. It carries out the reaction malonyl-[ACP] + acetyl-CoA + H(+) = 3-oxobutanoyl-[ACP] + CO2 + CoA. It participates in lipid metabolism; fatty acid biosynthesis. Its function is as follows. Catalyzes the condensation reaction of fatty acid synthesis by the addition to an acyl acceptor of two carbons from malonyl-ACP. Catalyzes the first condensation reaction which initiates fatty acid synthesis and may therefore play a role in governing the total rate of fatty acid production. Possesses both acetoacetyl-ACP synthase and acetyl transacylase activities. Its substrate specificity determines the biosynthesis of branched-chain and/or straight-chain of fatty acids. The protein is Beta-ketoacyl-[acyl-carrier-protein] synthase III of Nostoc sp. (strain PCC 7120 / SAG 25.82 / UTEX 2576).